Here is a 1290-residue protein sequence, read N- to C-terminus: DNA-directed RNA polymerase subunit beta' (1290 aa).

Zn(2+) is bound by residues Cys-68, Cys-70, Cys-83, and Cys-86. Mg(2+)-binding residues include Asp-530, Asp-532, and Asp-534. Cys-909, Cys-985, Cys-992, and Cys-995 together coordinate Zn(2+).

The protein belongs to the RNA polymerase beta' chain family. The RNAP catalytic core consists of 2 alpha, 1 beta, 1 beta' and 1 omega subunit. When a sigma factor is associated with the core the holoenzyme is formed, which can initiate transcription. The cofactor is Mg(2+). Requires Zn(2+) as cofactor.

The catalysed reaction is RNA(n) + a ribonucleoside 5'-triphosphate = RNA(n+1) + diphosphate. In terms of biological role, DNA-dependent RNA polymerase catalyzes the transcription of DNA into RNA using the four ribonucleoside triphosphates as substrates. The sequence is that of DNA-directed RNA polymerase subunit beta' from Mycoplasma pneumoniae (strain ATCC 29342 / M129 / Subtype 1) (Mycoplasmoides pneumoniae).